We begin with the raw amino-acid sequence, 91 residues long: DNA-binding protein HU (91 aa).

Belongs to the bacterial histone-like protein family.

Functionally, histone-like DNA-binding protein which is capable of wrapping DNA to stabilize it, and thus to prevent its denaturation under extreme environmental conditions. Also seems to act as a fortuitous virulence factor in delayed sequelae by binding to heparan sulfate-proteoglycans in the extracellular matrix of target organs and acting as a nidus for in situ immune complex formation. The polypeptide is DNA-binding protein HU (hup) (Streptococcus pyogenes serotype M1).